We begin with the raw amino-acid sequence, 291 residues long: MGTPWRKRKGIAGPGLPDLSCALVLQPRAQVGTMSPAIALAFLPLVVTLLVRYRHYFRLLVRTVLLRSLRDCLSGLRIEERAFSYVLTHALPGDPGHILTTLDHWSSRCEYLSHMGPVKGQILMRLVEEKAPACVLELGTYCGYSTLLIARALPPGGRLLTVERDPRTAAVAEKLIRLAGFDEHMVELIVGSSEDVIPCLRTQYQLSRADLVLLAHRPRCYLRDLQLLEAHALLPAGATVLADHVLFPGAPRFLQYAKSCGRYRCRLHHTGLPDFPAIKDGIAQLTYAGPG.

The helical transmembrane segment at 31–51 threads the bilayer; sequence VGTMSPAIALAFLPLVVTLLV. Residues glutamate 137, 139 to 140, serine 145, glutamate 163, and serine 193 each bind S-adenosyl-L-methionine; that span reads GT.

This sequence belongs to the class I-like SAM-binding methyltransferase superfamily. Cation-dependent O-methyltransferase family. As to quaternary structure, interacts with LHFPL5, PCDH15, TMC1, TMC2 and TMIE. Interacts directly with TMC1. The interaction of TOMT with TMC1 and TMC2 is required for the transportation of TMC1/2 into the stereocilia of hair cells.

It localises to the membrane. It is found in the cytoplasm. The protein localises to the endoplasmic reticulum. The catalysed reaction is a catechol + S-adenosyl-L-methionine = a guaiacol + S-adenosyl-L-homocysteine + H(+). Catalyzes the O-methylation, and thereby the inactivation, of catecholamine neurotransmitters and catechol hormones. Required for auditory function. Component of the cochlear hair cell's mechanotransduction (MET) machinery. Involved in the assembly of the asymmetric tip-link MET complex. Required for transportation of TMC1 and TMC2 proteins into the mechanically sensitive stereocilia of the hair cells. The function in MET is independent of the enzymatic activity. In Homo sapiens (Human), this protein is Transmembrane O-methyltransferase.